The sequence spans 182 residues: Oligoribonuclease (182 aa).

The 164-residue stretch at 8–171 (LIWIDLEMTG…DDIRESIKEL (164 aa)) folds into the Exonuclease domain. The active site involves tyrosine 129.

Belongs to the oligoribonuclease family.

It localises to the cytoplasm. In terms of biological role, 3'-to-5' exoribonuclease specific for small oligoribonucleotides. This is Oligoribonuclease from Actinobacillus succinogenes (strain ATCC 55618 / DSM 22257 / CCUG 43843 / 130Z).